We begin with the raw amino-acid sequence, 116 residues long: Transcription elongation factor SPT4 homolog 1 (116 aa).

A C4-type zinc finger spans residues Cys19–Cys39.

The protein belongs to the SPT4 family.

The protein localises to the nucleus. Its function is as follows. May regulate transcription elongation by RNA polymerase II. May enhance transcriptional pausing at sites proximal to the promoter, which may in turn facilitate the assembly of an elongation competent RNA polymerase II complex. The sequence is that of Transcription elongation factor SPT4 homolog 1 from Arabidopsis thaliana (Mouse-ear cress).